The chain runs to 214 residues: Pyridoxine/pyridoxamine 5'-phosphate oxidase (214 aa).

Residues 7-10 (REEY) and lysine 65 each bind substrate. FMN is bound by residues 60-65 (RTVLLK), 75-76 (FT), arginine 81, lysine 82, and glutamine 104. Residues tyrosine 122, arginine 126, and serine 130 each contribute to the substrate site. Residues 139–140 (QS) and tryptophan 184 contribute to the FMN site. 190-192 (RLH) is a binding site for substrate. Arginine 194 is an FMN binding site.

It belongs to the pyridoxamine 5'-phosphate oxidase family. Homodimer. The cofactor is FMN.

The catalysed reaction is pyridoxamine 5'-phosphate + O2 + H2O = pyridoxal 5'-phosphate + H2O2 + NH4(+). It catalyses the reaction pyridoxine 5'-phosphate + O2 = pyridoxal 5'-phosphate + H2O2. The protein operates within cofactor metabolism; pyridoxal 5'-phosphate salvage; pyridoxal 5'-phosphate from pyridoxamine 5'-phosphate: step 1/1. It functions in the pathway cofactor metabolism; pyridoxal 5'-phosphate salvage; pyridoxal 5'-phosphate from pyridoxine 5'-phosphate: step 1/1. Its function is as follows. Catalyzes the oxidation of either pyridoxine 5'-phosphate (PNP) or pyridoxamine 5'-phosphate (PMP) into pyridoxal 5'-phosphate (PLP). The chain is Pyridoxine/pyridoxamine 5'-phosphate oxidase from Crocosphaera subtropica (strain ATCC 51142 / BH68) (Cyanothece sp. (strain ATCC 51142)).